We begin with the raw amino-acid sequence, 925 residues long: Bifunctional imidazolonepropionase/histidine ammonia-lyase (925 aa).

The tract at residues 1 to 414 is imidazolonepropionase; it reads MTKNSSTVFT…IKPHVRMEPF (414 aa). Fe(3+) is bound by residues His73 and His75. 2 residues coordinate Zn(2+): His73 and His75. Positions 82, 145, and 178 each coordinate 4-imidazolone-5-propanoate. Tyr145 contacts N-formimidoyl-L-glutamate. Residue His243 participates in Fe(3+) binding. His243 is a Zn(2+) binding site. Gln246 provides a ligand contact to 4-imidazolone-5-propanoate. Residue Asp318 coordinates Fe(3+). Asp318 provides a ligand contact to Zn(2+). Positions 320 and 322 each coordinate N-formimidoyl-L-glutamate. Thr323 provides a ligand contact to 4-imidazolone-5-propanoate. A histidine ammonia-lyase region spans residues 415-925; it reads MTIILKPGSV…SAGILPDLEA (511 aa). Residues 556 to 558 constitute a cross-link (5-imidazolinone (Ala-Gly)); the sequence is ASG. Ser557 is subject to 2,3-didehydroalanine (Ser).

It in the N-terminal section; belongs to the metallo-dependent hydrolases superfamily. HutI family. In the C-terminal section; belongs to the PAL/histidase family. Zn(2+) serves as cofactor. It depends on Fe(3+) as a cofactor. Post-translationally, contains an active site 4-methylidene-imidazol-5-one (MIO), which is formed autocatalytically by cyclization and dehydration of residues Ala-Ser-Gly.

The protein resides in the cytoplasm. It catalyses the reaction 4-imidazolone-5-propanoate + H2O = N-formimidoyl-L-glutamate. The catalysed reaction is L-histidine = trans-urocanate + NH4(+). The protein operates within amino-acid degradation; L-histidine degradation into L-glutamate; N-formimidoyl-L-glutamate from L-histidine: step 1/3. It functions in the pathway amino-acid degradation; L-histidine degradation into L-glutamate; N-formimidoyl-L-glutamate from L-histidine: step 3/3. Catalyzes the hydrolytic cleavage of the carbon-nitrogen bond in imidazolone-5-propanoate to yield N-formimidoyl-L-glutamate. It is the third step in the universal histidine degradation pathway. The polypeptide is Bifunctional imidazolonepropionase/histidine ammonia-lyase (hutIH) (Brucella melitensis biotype 1 (strain ATCC 23456 / CCUG 17765 / NCTC 10094 / 16M)).